Consider the following 134-residue polypeptide: Profilin-3 (134 aa).

A disulfide bridge connects residues Cys-13 and Cys-118. The Involved in PIP2 interaction signature appears at 84-100; sequence AVIRGKKGSGGITIKKT. Position 114 is a phosphothreonine (Thr-114).

It belongs to the profilin family. Occurs in many kinds of cells as a complex with monomeric actin in a 1:1 ratio. In terms of processing, phosphorylated by MAP kinases.

The protein localises to the cytoplasm. The protein resides in the cytoskeleton. Binds to actin and affects the structure of the cytoskeleton. At high concentrations, profilin prevents the polymerization of actin, whereas it enhances it at low concentrations. The protein is Profilin-3 of Olea europaea (Common olive).